The sequence spans 113 residues: Hydrogenase maturation factor HypA 1 (113 aa).

H2 is a Ni(2+) binding site. Residues C73, C76, C89, and C92 each coordinate Zn(2+).

Belongs to the HypA/HybF family.

Involved in the maturation of [NiFe] hydrogenases. Required for nickel insertion into the metal center of the hydrogenase. The sequence is that of Hydrogenase maturation factor HypA 1 from Bradyrhizobium diazoefficiens (strain JCM 10833 / BCRC 13528 / IAM 13628 / NBRC 14792 / USDA 110).